Consider the following 205-residue polypeptide: Probable GTP-binding protein EngB (205 aa).

In terms of domain architecture, EngB-type G spans 29–203; the sequence is QGAEIAFIGR…KAVLSQWFRS (175 aa). GTP is bound by residues 37–44, 64–68, 82–85, 149–152, and 182–184; these read GRSNAGKS, GRTQM, DLPG, TKSD, and FSS. Residues Ser44 and Thr66 each contribute to the Mg(2+) site.

Belongs to the TRAFAC class TrmE-Era-EngA-EngB-Septin-like GTPase superfamily. EngB GTPase family. Mg(2+) serves as cofactor.

Functionally, necessary for normal cell division and for the maintenance of normal septation. This Coxiella burnetii (strain CbuG_Q212) (Coxiella burnetii (strain Q212)) protein is Probable GTP-binding protein EngB.